The chain runs to 1897 residues: uncharacterized protein (1897 aa).

One can recognise a Peptidase S74 domain in the interval 1661-1888 (SDERVKTNIR…AKVISLESRL (228 aa)). Residues 1865–1894 (AALQEIDRQLQLEKAKVISLESRLSALELK) adopt a coiled-coil conformation.

This is an uncharacterized protein from Micromonas pusilla (Picoplanktonic green alga).